Reading from the N-terminus, the 68-residue chain is Protein SlyX homolog (68 aa).

Belongs to the SlyX family.

The protein is Protein SlyX homolog of Pseudomonas syringae pv. tomato (strain ATCC BAA-871 / DC3000).